The following is a 532-amino-acid chain: tRNA-2-methylthio-N(6)-dimethylallyladenosine synthase (532 aa).

The disordered stretch occupies residues 1 to 21 (MTSTVAHGAGSAGPADDVEPM). In terms of domain architecture, MTTase N-terminal spans 24 to 140 (RTYQVRTYGC…LPALLDRARH (117 aa)). Residues Cys-33, Cys-69, Cys-103, Cys-177, Cys-181, and Cys-184 each coordinate [4Fe-4S] cluster. In terms of domain architecture, Radical SAM core spans 163 to 399 (RESAYAAWVS…VELQEQISLE (237 aa)). The TRAM domain maps to 402–470 (RAIVGQRVEL…PHHLIADGGI (69 aa)). The segment at 510–532 (TSCGSAGGCGSADGAGSSAGDPQ) is disordered. Positions 523-532 (GAGSSAGDPQ) are enriched in low complexity.

The protein belongs to the methylthiotransferase family. MiaB subfamily. Monomer. The cofactor is [4Fe-4S] cluster.

The protein localises to the cytoplasm. It carries out the reaction N(6)-dimethylallyladenosine(37) in tRNA + (sulfur carrier)-SH + AH2 + 2 S-adenosyl-L-methionine = 2-methylsulfanyl-N(6)-dimethylallyladenosine(37) in tRNA + (sulfur carrier)-H + 5'-deoxyadenosine + L-methionine + A + S-adenosyl-L-homocysteine + 2 H(+). In terms of biological role, catalyzes the methylthiolation of N6-(dimethylallyl)adenosine (i(6)A), leading to the formation of 2-methylthio-N6-(dimethylallyl)adenosine (ms(2)i(6)A) at position 37 in tRNAs that read codons beginning with uridine. This chain is tRNA-2-methylthio-N(6)-dimethylallyladenosine synthase, found in Mycobacterium ulcerans (strain Agy99).